The following is a 348-amino-acid chain: Rhodopsin (348 aa).

M1 carries the N-acetylmethionine modification. Residues 1–36 are Extracellular-facing; it reads MNGTEGPNFYVPFSNVTGVVRSPFEQPQYYLAEPWQ. N2 and N15 each carry an N-linked (GlcNAc...) asparagine glycan. The helical transmembrane segment at 37–61 threads the bilayer; sequence FSMLAAYMFLLIVLGFPINFLTLYV. At 62–73 the chain is on the cytoplasmic side; that stretch reads TVQHKKLRTPLN. A helical transmembrane segment spans residues 74–96; the sequence is YILLNLAVADLFMVFGGFTTTLY. The Extracellular segment spans residues 97-110; sequence TSLHGYFVFGPTGC. Cysteines 110 and 187 form a disulfide. A helical transmembrane segment spans residues 111-133; sequence NLEGFFATLGGEIALWSLVVLAI. Residues 134-136 carry the 'Ionic lock' involved in activated form stabilization motif; that stretch reads ERY. Over 134–152 the chain is Cytoplasmic; the sequence is ERYVVVCKPMSNFRFGENH. A helical membrane pass occupies residues 153 to 173; the sequence is AIMGVVFTWIMALACAAPPLV. Residues 174-202 lie on the Extracellular side of the membrane; the sequence is GWSRYIPEGMQCSCGIDYYTLKPEVNNES. E201 contacts Zn(2+). Residues 203 to 224 traverse the membrane as a helical segment; it reads FVIYMFVVHFTIPMIVIFFCYG. Residues 225–252 lie on the Cytoplasmic side of the membrane; sequence QLVFTVKEAAAQQQESATTQKAEKEVTR. The chain crosses the membrane as a helical span at residues 253 to 274; it reads MVIIMVIFFLICWLPYASVAFY. Over 275–286 the chain is Extracellular; that stretch reads IFTHQGSNFGPI. A Zn(2+)-binding site is contributed by Q279. The chain crosses the membrane as a helical span at residues 287 to 308; the sequence is FMTLPAFFAKSSSIYNPVIYIM. An N6-(retinylidene)lysine modification is found at K296. Residues 309-348 lie on the Cytoplasmic side of the membrane; it reads LNKQFRNCMLTTLCCGKNPLGDDDASATASKTETSQVAPA. S-palmitoyl cysteine attachment occurs at residues C322 and C323. The interaction with SAG stretch occupies residues 330–348; sequence DDDASATASKTETSQVAPA. Phosphoserine is present on S334. The residue at position 336 (T336) is a Phosphothreonine. Residue S338 is modified to Phosphoserine. Phosphothreonine occurs at positions 340 and 342. Residue S343 is modified to Phosphoserine.

This sequence belongs to the G-protein coupled receptor 1 family. Opsin subfamily. As to quaternary structure, homodimer. May form a complex composed of RHO, GRK1 and RCVRN in a Ca(2+)-dependent manner; RCVRN prevents the interaction between GRK1 and RHO. Interacts with GRK1. Interacts (phosphorylated form) with SAG. Interacts with GNAT1. Interacts with GNAT3. SAG and G-proteins compete for a common binding site. Interacts with PRCD; the interaction promotes PRCD stability. Forms a complex with ASAP1 and ARF4. Forms a complex with ASAP1, RAB11A, Rabin8/RAB3IP, ARF4 and RAB11FIP3; the complex regulates Golgi-to-cilia rhodopsin/RHO transport in photoreceptors. Phosphorylated on some or all of the serine and threonine residues present in the C-terminal region. In terms of processing, contains one covalently linked retinal chromophore. Upon light absorption, the covalently bound 11-cis-retinal is converted to all-trans-retinal. After hydrolysis of the Schiff base and release of the covalently bound all-trans-retinal, active rhodopsin is regenerated by binding of a fresh molecule of 11-cis-retinal. As to expression, rod-shaped photoreceptor cells in the retina (at protein level).

Its subcellular location is the membrane. It localises to the cell projection. It is found in the cilium. The protein resides in the photoreceptor outer segment. In terms of biological role, photoreceptor required for image-forming vision at low light intensity. Required for photoreceptor cell viability after birth. Light-induced isomerization of 11-cis to all-trans retinal triggers a conformational change that activates signaling via G-proteins. Subsequent receptor phosphorylation mediates displacement of the bound G-protein alpha subunit by the arrestin SAG and terminates signaling. This Mus musculus (Mouse) protein is Rhodopsin (Rho).